Consider the following 177-residue polypeptide: MKLPKEGDFITIQSYKHDGSLHRTWRDTMVLKTTENALIGVNDHTLVTESDGRRWVTREPAIVYFHKKYWFNIIAMIRDNGVSYYCNLASPYMMDTEALKYIDYDLDVKVFADGEKRLLDVDEYGIHKKEMQYSADMDFILKENVKILVDWINHEKGPFSKAYITIWYKRYLELKNR.

Arg-23 (proton donor) is an active-site residue. Residues Asn-87, Asp-103, Asp-105, Asp-107, Asp-120, and Glu-123 each contribute to the Mg(2+) site.

Belongs to the Ntdp family. Mg(2+) is required as a cofactor.

The enzyme catalyses a ribonucleoside 5'-triphosphate + H2O = a ribonucleoside 5'-diphosphate + phosphate + H(+). It carries out the reaction a ribonucleoside 5'-diphosphate + H2O = a ribonucleoside 5'-phosphate + phosphate + H(+). Functionally, has nucleoside phosphatase activity towards nucleoside triphosphates and nucleoside diphosphates. The polypeptide is Nucleoside triphosphate/diphosphate phosphatase (Streptococcus pyogenes serotype M3 (strain ATCC BAA-595 / MGAS315)).